The primary structure comprises 180 residues: 3-phenylpropionate/cinnamic acid dioxygenase subunit beta (180 aa).

The protein belongs to the bacterial ring-hydroxylating dioxygenase beta subunit family. This dioxygenase system consists of four proteins: the two subunits of the hydroxylase component (HcaE and HcaF), a ferredoxin (HcaC) and a ferredoxin reductase (HcaD).

The catalysed reaction is 3-phenylpropanoate + NADH + O2 + H(+) = 3-(cis-5,6-dihydroxycyclohexa-1,3-dien-1-yl)propanoate + NAD(+). It carries out the reaction (E)-cinnamate + NADH + O2 + H(+) = (2E)-3-(cis-5,6-dihydroxycyclohexa-1,3-dien-1-yl)prop-2-enoate + NAD(+). The protein operates within aromatic compound metabolism; 3-phenylpropanoate degradation. Its function is as follows. Part of the multicomponent 3-phenylpropionate dioxygenase. Converts 3-phenylpropionic acid (PP) and cinnamic acid (CI) into 3-phenylpropionate-dihydrodiol (PP-dihydrodiol) and cinnamic acid-dihydrodiol (CI-dihydrodiol), respectively. This is 3-phenylpropionate/cinnamic acid dioxygenase subunit beta from Photorhabdus laumondii subsp. laumondii (strain DSM 15139 / CIP 105565 / TT01) (Photorhabdus luminescens subsp. laumondii).